Reading from the N-terminus, the 64-residue chain is Makatoxin-1 (64 aa).

Positions 2–64 (RDAYIADSEN…VPIRISGSCR (63 aa)) constitute an LCN-type CS-alpha/beta domain. 4 disulfide bridges follow: cysteine 12-cysteine 63, cysteine 16-cysteine 36, cysteine 22-cysteine 46, and cysteine 26-cysteine 48.

In terms of tissue distribution, expressed by the venom gland.

It localises to the secreted. Its function is as follows. This protein markedly relaxes the rat carbachol-precontracted anococcygeus muscle. This relaxation is inhibited by the inhibitor of nitric oxide (NO) synthase, N-nitro-L-arginine methyl ester (L-NAME), suggesting that the response induced by this protein is NO-mediated. The polypeptide is Makatoxin-1 (Olivierus martensii (Manchurian scorpion)).